The chain runs to 692 residues: DNA-binding protein RFX2 (692 aa).

The segment at 1–26 (MQNSEGGADSPATVALRPAAQPVPAS) is disordered. Residue serine 26 is modified to Phosphoserine. Positions 169 to 244 (TLQWLLDNYE…YHYYGIRLKP (76 aa)) form a DNA-binding region, RFX-type winged-helix. Residues 261-296 (RQQPTHQKPRYRPAQKSDSLGDGSAHSNMHSTPEQA) form a disordered region. Polar residues predominate over residues 285–294 (AHSNMHSTPE). The residue at position 386 (serine 386) is a Phosphoserine. The segment covering 660–685 (DGHSSEADVDGRSLGEPLVKRERSDP) has biased composition (basic and acidic residues). Residues 660-692 (DGHSSEADVDGRSLGEPLVKRERSDPSHPLQGI) are disordered.

This sequence belongs to the RFX family. As to quaternary structure, homodimer; probably only forms homodimers in testis. Heterodimer; heterodimerizes with RFX1 and RFX3. Expressed at highest level in testis. Expressed at lower level in thymus. Also expressed in stomach, kidney, liver, brain and heart. Weakly expressed in spleen and lung. Within testis, most abundantly present in spermatocytes: present from pachytene spermatocytes to early spermatids (at protein level). Also present in non-germinal tissues.

It localises to the nucleus. It is found in the cytoplasm. Functionally, transcription factor that acts as a key regulator of spermatogenesis. Acts by regulating expression of genes required for the haploid phase during spermiogenesis, such as genes required for cilium assembly and function. Recognizes and binds the X-box, a regulatory motif with DNA sequence 5'-GTNRCC(0-3N)RGYAAC-3' present on promoters. Probably activates transcription of the testis-specific histone gene H1-6. The polypeptide is DNA-binding protein RFX2 (Rfx2) (Rattus norvegicus (Rat)).